An 86-amino-acid chain; its full sequence is Toxin CSTX-20 (86 aa).

As to expression, expressed by the venom gland.

The protein resides in the secreted. This Cupiennius salei (American wandering spider) protein is Toxin CSTX-20.